The sequence spans 171 residues: O-acetyl-ADP-ribose deacetylase 1 (171 aa).

Residues 1–171 enclose the Macro domain; it reads MKKITVIQGD…NYDLYLKLLN (171 aa). Substrate is bound by residues 10-11, asparagine 24, 32-34, and 121-125; these read DI, GVD, and STGIY. The active-site Proton acceptor is aspartate 34.

This sequence belongs to the MacroD-type family. YmdB subfamily. In terms of assembly, homodimer. Interacts with RNase III.

It catalyses the reaction 3''-O-acetyl-ADP-D-ribose + H2O = ADP-D-ribose + acetate + H(+). The enzyme catalyses 2''-O-acetyl-ADP-D-ribose + H2O = ADP-D-ribose + acetate + H(+). Deacetylates O-acetyl-ADP ribose to yield ADP-ribose and free acetate. Down-regulates ribonuclease 3 (RNase III) activity. Acts by interacting directly with the region of the ribonuclease that is required for dimerization/activation. The protein is O-acetyl-ADP-ribose deacetylase 1 of Pantoea vagans (strain C9-1) (Pantoea agglomerans (strain C9-1)).